The following is a 294-amino-acid chain: Mimecan (294 aa).

The first 19 residues, 1 to 19 (MKTLQAAFFLVAFVPLVKP), serve as a signal peptide directing secretion. An N-linked (GlcNAc...) asparagine glycan is attached at Asn-61. 7 LRR repeats span residues 108 to 127 (EAVP…FNKI), 128 to 151 (KRIA…GNMI), 152 to 175 (EEIE…ENRL), 176 to 195 (VKLP…QNRI), 196 to 221 (KSRG…HNAL), 222 to 242 (ESVP…HNNI), and 243 to 273 (TTIN…GNPI). Asn-241 and Asn-254 each carry an N-linked (GlcNAc...) asparagine glycan. Cysteines 251 and 284 form a disulfide.

The protein belongs to the small leucine-rich proteoglycan (SLRP) family. SLRP class III subfamily. The composition of the N-linked chains or the substitution of the N-linked sites is different between embryonic and adult tissues. In terms of processing, contains keratan sulfate.

It is found in the secreted. The protein resides in the extracellular space. It localises to the extracellular matrix. Induces bone formation in conjunction with TGF-beta-1 or TGF-beta-2. This is Mimecan (OGN) from Gallus gallus (Chicken).